The primary structure comprises 465 residues: Mothers against decapentaplegic homolog 1 (465 aa).

Met-1 is subject to N-acetylmethionine. The region spanning 12-136 (PAVKRLLGWK…YKRVESPVLP (125 aa)) is the MH1 domain. 4 residues coordinate Zn(2+): Cys-64, Cys-109, Cys-121, and His-126. The interval 162–246 (NEPHMPLNAT…DGSQPMDTNM (85 aa)) is disordered. Residues 179 to 212 (PNSHPFPHSPNSSYPNSPGGSSSTYPHSPTSSDP) show a composition bias toward low complexity. Residues 221-232 (DTPPPAYLPPED) are compositionally biased toward pro residues. Positions 271 to 465 (WCSIVYYELN…SPHNPISSVS (195 aa)) constitute an MH2 domain. Phosphothreonine; by MINK1, TNIK and MAP4K4 is present on Thr-322. Positions 418–428 (KGWGAEYHRQD) are L3 loop. Residues Ser-463 and Ser-465 each carry the phosphoserine modification.

This sequence belongs to the dwarfin/SMAD family. Found in a complex with SMAD4 and YY1. Interacts with HGS, NANOG and ZCCHC12. Upon C-terminus phosphorylation: forms trimers with another SMAD1 and the co-SMAD SMAD4. Interacts with PEBP2-alpha subunit, CREB-binding protein (CBP), p300, SMURF1, SMURF2, USP15 and HOXC8. Associates with ZNF423 or ZNF521 in response to BMP2 leading to activate transcription of BMP target genes. Interacts with SKOR1. Interacts (via MH2 domain) with LEMD3. Binding to LEMD3 results in at least a partial reduction of receptor-mediated phosphorylation. Forms a ternary complex with PSMB4 and OAZ1 before PSMB4 is incorporated into the 20S proteasome. Interacts (via MH2 domain) with FAM83G (via MH2 domain); in a SMAD4-independent manner. Interacts with ZC3H3. Interacts with TMEM119. Interacts (via MH1 and MH2 domains) with ZNF8. Interacts with RANBP3L; the interaction increases when SMAD1 is not phosphorylated and mediates SMAD1 nuclear export. Interacts with EGR1; this interaction inhibits SMAD1 dephosphorylation. Interacts with SMAD6. Interacts with YAP1. Interacts with MTMR4; negatively regulates BMP signaling through SMAD1 dephosphorylation and retention in endosomes. In terms of processing, phosphorylation of the C-terminal SVS motif by BMP type 1 receptor kinase activates SMAD1 by promoting dissociation from the receptor and trimerization with SMAD4. Phosphorylation by ERK2 MAP kinase in response to EGF or HGF prevents SMAD1 nuclear accumulation and transcriptional activity in response to BMP. Dephosphorylation, probably by PPM1A, induces its export from the nucleus to the cytoplasm. Dephosphorylation is inhibited by association with EGR1. Phosphorylation by CDK8/9 creates binding sites for YAP1, and subsequent phosphorylation by GSK3 switches off YAP1 binding and adds binding sites for SMURF1. Post-translationally, ubiquitinated by SMAD-specific E3 ubiquitin ligase SMURF1, leading to its degradation. Monoubiquitinated, leading to prevent DNA-binding. Deubiquitination by USP15 alleviates inhibition and promotes activation of TGF-beta target genes. Dephosphorylation, probably by PPM1A, induces its export from the nucleus to the cytoplasm. Phospho-SMAD1 is ubiquitinated by CHIP leading to disruption of the SMAD1-SMAD4 complex. Ubiquitous.

Its subcellular location is the cytoplasm. It is found in the nucleus. Functionally, transcriptional modulator that plays a role in various cellular processes, including embryonic development, cell differentiation, and tissue homeostasis. Upon BMP ligand binding to their receptors at the cell surface, is phosphorylated by activated type I BMP receptors (BMPRIs) and associates with SMAD4 to form a heteromeric complex which translocates into the nucleus acting as transcription factor. In turn, the hetero-trimeric complex recognizes cis-regulatory elements containing Smad Binding Elements (SBEs) to modulate the outcome of the signaling network. SMAD1/OAZ1/PSMB4 complex mediates the degradation of the CREBBP/EP300 repressor SNIP1. Positively regulates BMP4-induced expression of odontogenic development regulator MSX1 following IPO7-mediated nuclear import. The sequence is that of Mothers against decapentaplegic homolog 1 (Smad1) from Mus musculus (Mouse).